The chain runs to 194 residues: tRNA (guanosine(18)-2'-O)-methyltransferase (194 aa).

Residues T99, 122–126, I142, and L151 contribute to the S-adenosyl-L-methionine site; that span reads GAEKW.

The protein belongs to the class IV-like SAM-binding methyltransferase superfamily. RNA methyltransferase TrmH family. In terms of assembly, monomer.

It carries out the reaction guanosine(18) in tRNA + S-adenosyl-L-methionine = 2'-O-methylguanosine(18) in tRNA + S-adenosyl-L-homocysteine + H(+). With respect to regulation, stimulated by magnesium ions and spermine. Inhibited by S-adenosyl-homocysteine. In terms of biological role, catalyzes the 2'-O methylation of guanosine at position 18 in tRNA. In Thermus thermophilus (strain ATCC BAA-163 / DSM 7039 / HB27), this protein is tRNA (guanosine(18)-2'-O)-methyltransferase.